A 428-amino-acid chain; its full sequence is GTPase Obg (428 aa).

The Obg domain occupies 1-158 (MFVDQVKVYV…RDVILELKVL (158 aa)). A disordered region spans residues 118–145 (KGGRGGRGNSRFATPANPAPQLSENGEP). Residues 159–329 (ADVGLVGFPS…LLFEIANQLE (171 aa)) enclose the OBG-type G domain. GTP-binding positions include 165-172 (GFPSVGKS), 190-194 (FTTLV), 212-215 (DLPG), 282-285 (NKMD), and 310-312 (SAI). Residues Ser172 and Thr192 each contribute to the Mg(2+) site. Residues 350-428 (RFDEGDAPFE…LLEFEFEFID (79 aa)) form the OCT domain.

It belongs to the TRAFAC class OBG-HflX-like GTPase superfamily. OBG GTPase family. In terms of assembly, monomer. Requires Mg(2+) as cofactor.

It is found in the cytoplasm. An essential GTPase which binds GTP, GDP and possibly (p)ppGpp with moderate affinity, with high nucleotide exchange rates and a fairly low GTP hydrolysis rate. Plays a role in control of the cell cycle, stress response, ribosome biogenesis and in those bacteria that undergo differentiation, in morphogenesis control. The chain is GTPase Obg from Bacillus pumilus (strain SAFR-032).